Here is a 327-residue protein sequence, read N- to C-terminus: Gonadotropin-releasing hormone receptor (327 aa).

The Extracellular segment spans residues 1–38 (MANNASLEQDQNHCSAINNSIPLTQGKLPTLTLSGKIR). 2 N-linked (GlcNAc...) asparagine glycosylation sites follow: asparagine 4 and asparagine 18. Residues 39-58 (VTVTFFLFLLSTAFNASFLV) traverse the membrane as a helical segment. The Cytoplasmic segment spans residues 59–77 (KLQRWTQKRKKGKKLSRMK). A helical transmembrane segment spans residues 78 to 97 (VLLKHLTLANLLETLIVMPL). Residues 98–115 (DGMWNITVQWYAGEFLCK) are Extracellular-facing. Asparagine 102 carries N-linked (GlcNAc...) asparagine glycosylation. The cysteines at positions 114 and 195 are disulfide-linked. The chain crosses the membrane as a helical span at residues 116 to 137 (VLSYLKLFSMYAPAFMMVVISL). The Cytoplasmic segment spans residues 138–164 (DRSLAVTQPLAVQSKSKLERSMTSLAW). Residues 165 to 184 (ILSIVFAGPQLYIFRMIYLA) form a helical membrane-spanning segment. Residues 185–211 (DGSGPAVFSQCVTHCSFPQWWHEAFYN) are Extracellular-facing. Residues 212–231 (FFTFSCLFIIPLLIMLICNA) form a helical membrane-spanning segment. Over 232 to 280 (KIIFALTRVLHQDPRKLQLNQSKNNIPRARLRTLKMTVAFGTSFVICWT) the chain is Cytoplasmic. Residues 281 to 299 (PYYVLGIWYWFDPEMLNRV) form a helical membrane-spanning segment. At 300–305 (SEPVNH) the chain is on the extracellular side. The helical transmembrane segment at 306-325 (FFFLFAFLNPCFDPLIYGYF) threads the bilayer. Topologically, residues 326 to 327 (SL) are cytoplasmic.

Belongs to the G-protein coupled receptor 1 family.

Its subcellular location is the cell membrane. Its function is as follows. Receptor for gonadotropin releasing hormone (GnRH) that mediates the action of GnRH to stimulate the secretion of the gonadotropic hormones luteinizing hormone (LH) and follicle-stimulating hormone (FSH). This receptor mediates its action by association with G-proteins that activate a phosphatidylinositol-calcium second messenger system. This Rattus norvegicus (Rat) protein is Gonadotropin-releasing hormone receptor (Gnrhr).